Here is a 559-residue protein sequence, read N- to C-terminus: Potassium-transporting ATPase potassium-binding subunit (559 aa).

Transmembrane regions (helical) follow at residues 5–25 (GFLLIASFLLILLVLAKPLGS), 27–47 (LARLIAAVPLPGVAGVERILW), 63–83 (LLALLTLNLLGLGILFCLLFW), 132–152 (GLTVQNFLSAATGIAVVFALI), 170–190 (LVRITLWILFPVALIIALFFI), 253–273 (LAQMLAIFLIPAALCFAFGEA), 283–303 (LLWAMSFIFVVCVAVVMWAEV), 327–347 (FGVLASSLFAVVTTAASCGAV), 356–376 (ALGGMVPMWLMQIGEVVFGGV), 379–399 (GLYGMLLFVLLAVFIAGLMIG), 416–436 (MTALAILVTPMLVLLGSALAM), 484–504 (LLAFCMFVGRFGVIIPVMAIA), and 524–544 (GALFIGLLIGTVLLVGALTFI).

Belongs to the KdpA family. In terms of assembly, the system is composed of three essential subunits: KdpA, KdpB and KdpC.

It localises to the cell inner membrane. Functionally, part of the high-affinity ATP-driven potassium transport (or Kdp) system, which catalyzes the hydrolysis of ATP coupled with the electrogenic transport of potassium into the cytoplasm. This subunit binds the periplasmic potassium ions and delivers the ions to the membrane domain of KdpB through an intramembrane tunnel. This is Potassium-transporting ATPase potassium-binding subunit from Salmonella typhi.